A 69-amino-acid polypeptide reads, in one-letter code: Cecropin-like peptide 1 (69 aa).

The N-terminal stretch at 1–23 (MNFTKLFVVFAVVLVAFAGQSEA) is a signal peptide. At Q68 the chain carries Glutamine amide.

As to expression, following bacterial infection, expressed in fat body, trachea and muscle.

The protein localises to the secreted. Antimicrobial peptide active against Gram-negative bacteria E.coli KCCM 11234 (MIC&lt;=1.03 uM), E.aerogenes KCCM 12177 (MIC&lt;=2.07 uM) and P.aeruginosa KCCM 11328 (MIC&lt;=2.07 uM). Not active against various Gram-positive bacteria at concentrations up to 4.14 uM. The polypeptide is Cecropin-like peptide 1 (Hermetia illucens (Black soldier fly)).